The following is a 393-amino-acid chain: NAD(P)H-quinone oxidoreductase subunit H, chloroplastic (393 aa).

This sequence belongs to the complex I 49 kDa subunit family. NDH is composed of at least 16 different subunits, 5 of which are encoded in the nucleus.

Its subcellular location is the plastid. It localises to the chloroplast thylakoid membrane. The catalysed reaction is a plastoquinone + NADH + (n+1) H(+)(in) = a plastoquinol + NAD(+) + n H(+)(out). It catalyses the reaction a plastoquinone + NADPH + (n+1) H(+)(in) = a plastoquinol + NADP(+) + n H(+)(out). Its function is as follows. NDH shuttles electrons from NAD(P)H:plastoquinone, via FMN and iron-sulfur (Fe-S) centers, to quinones in the photosynthetic chain and possibly in a chloroplast respiratory chain. The immediate electron acceptor for the enzyme in this species is believed to be plastoquinone. Couples the redox reaction to proton translocation, and thus conserves the redox energy in a proton gradient. This is NAD(P)H-quinone oxidoreductase subunit H, chloroplastic from Lactuca sativa (Garden lettuce).